Reading from the N-terminus, the 98-residue chain is UPF0235 protein CCNA_03737 (98 aa).

The protein belongs to the UPF0235 family.

The protein is UPF0235 protein CCNA_03737 of Caulobacter vibrioides (strain NA1000 / CB15N) (Caulobacter crescentus).